The chain runs to 432 residues: Pachytene checkpoint protein 2 homolog (432 aa).

Position 1 is an N-acetylmethionine (Met1). 179-186 (GPPGTGKT) is an ATP binding site.

This sequence belongs to the AAA ATPase family. PCH2 subfamily. In terms of assembly, specifically interacts with the ligand binding domain of the thyroid receptor (TR). This interaction does not require the presence of thyroid hormone for its interaction. Interacts with proteasome subunit PSMA8; to participate in meiosis progression during spermatogenesis. As to expression, widely expressed, including in testis.

Functionally, plays a key role in chromosome recombination and chromosome structure development during meiosis. Required at early steps in meiotic recombination that leads to non-crossovers pathways. Also needed for efficient completion of homologous synapsis by influencing crossover distribution along the chromosomes affecting both crossovers and non-crossovers pathways. Also required for development of higher-order chromosome structures and is needed for synaptonemal-complex formation. In males, required for efficient synapsis of the sex chromosomes and for sex body formation. Promotes early steps of the DNA double-strand breaks (DSBs) repair process upstream of the assembly of RAD51 complexes. Required for depletion of HORMAD1 and HORMAD2 from synapsed chromosomes. Plays a role in mitotic spindle assembly checkpoint (SAC) activation. The sequence is that of Pachytene checkpoint protein 2 homolog (Trip13) from Mus musculus (Mouse).